The primary structure comprises 69 residues: DNA-directed RNA polymerase subunit epsilon (69 aa).

The protein belongs to the RNA polymerase subunit epsilon family. RNAP is composed of a core of 2 alpha, a beta and a beta' subunit. The core is associated with a delta subunit, and at least one of epsilon or omega. When a sigma factor is associated with the core the holoenzyme is formed, which can initiate transcription.

The enzyme catalyses RNA(n) + a ribonucleoside 5'-triphosphate = RNA(n+1) + diphosphate. A non-essential component of RNA polymerase (RNAP). This is DNA-directed RNA polymerase subunit epsilon from Listeria monocytogenes serotype 4b (strain CLIP80459).